The primary structure comprises 365 residues: UDP-N-acetylglucosamine--N-acetylmuramyl-(pentapeptide) pyrophosphoryl-undecaprenol N-acetylglucosamine transferase (365 aa).

UDP-N-acetyl-alpha-D-glucosamine-binding positions include 12-14 (TGG), asparagine 128, arginine 169, serine 195, and glutamine 296.

It belongs to the glycosyltransferase 28 family. MurG subfamily.

Its subcellular location is the cell inner membrane. The catalysed reaction is di-trans,octa-cis-undecaprenyl diphospho-N-acetyl-alpha-D-muramoyl-L-alanyl-D-glutamyl-meso-2,6-diaminopimeloyl-D-alanyl-D-alanine + UDP-N-acetyl-alpha-D-glucosamine = di-trans,octa-cis-undecaprenyl diphospho-[N-acetyl-alpha-D-glucosaminyl-(1-&gt;4)]-N-acetyl-alpha-D-muramoyl-L-alanyl-D-glutamyl-meso-2,6-diaminopimeloyl-D-alanyl-D-alanine + UDP + H(+). The protein operates within cell wall biogenesis; peptidoglycan biosynthesis. In terms of biological role, cell wall formation. Catalyzes the transfer of a GlcNAc subunit on undecaprenyl-pyrophosphoryl-MurNAc-pentapeptide (lipid intermediate I) to form undecaprenyl-pyrophosphoryl-MurNAc-(pentapeptide)GlcNAc (lipid intermediate II). The sequence is that of UDP-N-acetylglucosamine--N-acetylmuramyl-(pentapeptide) pyrophosphoryl-undecaprenol N-acetylglucosamine transferase from Gluconobacter oxydans (strain 621H) (Gluconobacter suboxydans).